The chain runs to 680 residues: DNA ligase (680 aa).

Residues 44 to 48 (DYIYD), 94 to 95 (SL), and Glu-124 contribute to the NAD(+) site. Catalysis depends on Lys-126, which acts as the N6-AMP-lysine intermediate. 4 residues coordinate NAD(+): Arg-147, Glu-181, Lys-297, and Lys-321. Positions 415, 418, 433, and 438 each coordinate Zn(2+). The BRCT domain occupies 598-680 (DENSFFYGKK…VDEQVKEDGK (83 aa)).

The protein belongs to the NAD-dependent DNA ligase family. LigA subfamily. Mg(2+) is required as a cofactor. The cofactor is Mn(2+).

The enzyme catalyses NAD(+) + (deoxyribonucleotide)n-3'-hydroxyl + 5'-phospho-(deoxyribonucleotide)m = (deoxyribonucleotide)n+m + AMP + beta-nicotinamide D-nucleotide.. Functionally, DNA ligase that catalyzes the formation of phosphodiester linkages between 5'-phosphoryl and 3'-hydroxyl groups in double-stranded DNA using NAD as a coenzyme and as the energy source for the reaction. It is essential for DNA replication and repair of damaged DNA. This chain is DNA ligase, found in Leuconostoc mesenteroides subsp. mesenteroides (strain ATCC 8293 / DSM 20343 / BCRC 11652 / CCM 1803 / JCM 6124 / NCDO 523 / NBRC 100496 / NCIMB 8023 / NCTC 12954 / NRRL B-1118 / 37Y).